The chain runs to 431 residues: Cytochrome c oxidase subunit 3 (431 aa).

7 helical membrane passes run 70-90 (IAPLAVTLPLAFFVLNYFGVI), 96-116 (FVIALSSFIGGLTIWAISIVF), 132-152 (LVMGMMMFIISEIMFFFSFFW), 176-196 (VYSYMGLPLLNTVLLLLSGAI), 321-341 (LYFTLVCAVVFLFCQGYEYYF), 356-376 (FLLTGFHGFHVLVGSILIGII), and 408-428 (LFYWHFVDIVWIFLYIVIYWW).

The protein belongs to the cytochrome c oxidase subunit 3 family. In terms of assembly, component of the cytochrome c oxidase (complex IV, CIV), a multisubunit enzyme composed of a catalytic core of 3 subunits and several supernumerary subunits. The complex exists as a monomer or a dimer and forms supercomplexes (SCs) in the inner mitochondrial membrane with ubiquinol-cytochrome c oxidoreductase (cytochrome b-c1 complex, complex III, CIII).

The protein resides in the mitochondrion inner membrane. The enzyme catalyses 4 Fe(II)-[cytochrome c] + O2 + 8 H(+)(in) = 4 Fe(III)-[cytochrome c] + 2 H2O + 4 H(+)(out). Functionally, component of the cytochrome c oxidase, the last enzyme in the mitochondrial electron transport chain which drives oxidative phosphorylation. The respiratory chain contains 3 multisubunit complexes succinate dehydrogenase (complex II, CII), ubiquinol-cytochrome c oxidoreductase (cytochrome b-c1 complex, complex III, CIII) and cytochrome c oxidase (complex IV, CIV), that cooperate to transfer electrons derived from NADH and succinate to molecular oxygen, creating an electrochemical gradient over the inner membrane that drives transmembrane transport and the ATP synthase. Cytochrome c oxidase is the component of the respiratory chain that catalyzes the reduction of oxygen to water. Electrons originating from reduced cytochrome c in the intermembrane space (IMS) are transferred via the dinuclear copper A center (CU(A)) of subunit 2 and heme A of subunit 1 to the active site in subunit 1, a binuclear center (BNC) formed by heme A3 and copper B (CU(B)). The BNC reduces molecular oxygen to 2 water molecules using 4 electrons from cytochrome c in the IMS and 4 protons from the mitochondrial matrix. The sequence is that of Cytochrome c oxidase subunit 3 (cox3) from Dictyostelium citrinum (Slime mold).